The sequence spans 198 residues: Density-regulated protein (198 aa).

The segment covering 1-11 (MAADISESSGA) has biased composition (polar residues). 2 disordered regions span residues 1–20 (MAAD…PRNS) and 72–110 (NSPK…KKKT). Position 2 is an N-acetylalanine (Ala2). A phosphoserine mark is found at Ser20 and Ser73. Thr86 carries the post-translational modification Phosphothreonine. The segment covering 95–110 (KQKRGGRGQIKQKKKT) has biased composition (basic residues). Residues 115–182 (VTIAKIPRAK…DIIDVIQEKW (68 aa)) form the SUI1 domain. The residue at position 189 (Ser189) is a Phosphoserine.

It belongs to the DENR family. As to quaternary structure, interacts with MCTS1 (via PUA domain); the complex regulates translation reinitiation.

Its subcellular location is the cytoplasm. Its function is as follows. Translation regulator forming a complex with MCTS1 to promote translation reinitiation. Translation reinitiation is the process where the small ribosomal subunit remains attached to the mRNA following termination of translation of a regulatory upstream ORF (uORF), and resume scanning on the same mRNA molecule to initiate translation of a downstream ORF, usually the main ORF (mORF). The MCTS1/DENR complex is pivotal to two linked mechanisms essential for translation reinitiation. Firstly, the dissociation of deacylated tRNAs from post-termination 40S ribosomal complexes during ribosome recycling. Secondly, the recruitment in an EIF2-independent manner of aminoacylated initiator tRNA to P site of 40S ribosomes for a new round of translation. This regulatory mechanism governs the translation of more than 150 genes which translation reinitiation is MCTS1/DENR complex-dependent. The sequence is that of Density-regulated protein (DENR) from Pongo abelii (Sumatran orangutan).